We begin with the raw amino-acid sequence, 85 residues long: CRISPR-associated endoribonuclease Cas2 (85 aa).

Aspartate 8 contacts Mg(2+).

Belongs to the CRISPR-associated endoribonuclease Cas2 protein family. In terms of assembly, homodimer, forms a heterotetramer with a Cas1 homodimer. Mg(2+) is required as a cofactor.

Functionally, CRISPR (clustered regularly interspaced short palindromic repeat), is an adaptive immune system that provides protection against mobile genetic elements (viruses, transposable elements and conjugative plasmids). CRISPR clusters contain sequences complementary to antecedent mobile elements and target invading nucleic acids. CRISPR clusters are transcribed and processed into CRISPR RNA (crRNA). Functions as a ssRNA-specific endoribonuclease. Involved in the integration of spacer DNA into the CRISPR cassette. In Thermococcus kodakarensis (strain ATCC BAA-918 / JCM 12380 / KOD1) (Pyrococcus kodakaraensis (strain KOD1)), this protein is CRISPR-associated endoribonuclease Cas2.